The sequence spans 309 residues: Taste receptor type 2 member 31 (309 aa).

Residues 1–2 (MI) are Extracellular-facing. The helical transmembrane segment at 3–23 (TFLPTIFSILVVVIFVIGNFG) threads the bilayer. The Cytoplasmic segment spans residues 24 to 55 (NGFIALVNSIEWVKRQKISFADQILTALAVSR). The chain crosses the membrane as a helical span at residues 56 to 76 (VGLLWALLLNWYSTVFNPAFY). Topologically, residues 77–100 (SVGVRTTVYDVWTVTGHFSNWLAT) are extracellular. Residues 101–121 (SLSIFYLLKIANFSNLIFLHL) form a helical membrane-spanning segment. At 122–126 (KRRVK) the chain is on the cytoplasmic side. The helical transmembrane segment at 127 to 147 (SVILVMLLGPLLFLACQLFVI) threads the bilayer. Residues 148 to 181 (NMKEILRTKEYEGNMTWKIKLRSAMYLSDATITT) are Extracellular-facing. An N-linked (GlcNAc...) asparagine glycan is attached at Asn161. A helical transmembrane segment spans residues 182–202 (LANLVPFTLTLLSFLLLICSL). Residues 203-229 (CKHLNKMQLHGKGSQDPSTKVHIKVLQ) lie on the Cytoplasmic side of the membrane. A helical membrane pass occupies residues 230-250 (TVISFLLLCAIYFLSIMISVW). At 251–259 (SFGSLENKP) the chain is on the extracellular side. A helical membrane pass occupies residues 260–280 (VFMFCKAIRFSYPSIHPFILI). Over 281–309 (WGNKKLKQTFLSVLRQVRYWVKGEKPSSP) the chain is Cytoplasmic.

It belongs to the G-protein coupled receptor T2R family.

It localises to the membrane. Its function is as follows. Receptor that may play a role in the perception of bitterness and is gustducin-linked. May play a role in sensing the chemical composition of the gastrointestinal content. The activity of this receptor may stimulate alpha gustducin, mediate PLC-beta-2 activation and lead to the gating of TRPM5. This Pongo pygmaeus (Bornean orangutan) protein is Taste receptor type 2 member 31 (TAS2R31).